A 238-amino-acid polypeptide reads, in one-letter code: Ribonuclease PH (238 aa).

Phosphate contacts are provided by residues arginine 86 and glycine 124–arginine 126.

This sequence belongs to the RNase PH family. In terms of assembly, homohexameric ring arranged as a trimer of dimers.

The enzyme catalyses tRNA(n+1) + phosphate = tRNA(n) + a ribonucleoside 5'-diphosphate. Phosphorolytic 3'-5' exoribonuclease that plays an important role in tRNA 3'-end maturation. Removes nucleotide residues following the 3'-CCA terminus of tRNAs; can also add nucleotides to the ends of RNA molecules by using nucleoside diphosphates as substrates, but this may not be physiologically important. Probably plays a role in initiation of 16S rRNA degradation (leading to ribosome degradation) during starvation. The chain is Ribonuclease PH from Vibrio atlanticus (strain LGP32) (Vibrio splendidus (strain Mel32)).